The chain runs to 1244 residues: Superkiller complex protein 2 (1244 aa).

Positions 218 to 249 (LDLSGGDEDEGEAAGGPRGDNASPSPSGTPLV) are disordered. Phosphoserine is present on residues Ser-242 and Ser-253. One can recognise a Helicase ATP-binding domain in the interval 316–472 (ILHLEQHDSV…WIGRLKRRQI (157 aa)). 329–336 (AHTSAGKT) contacts ATP. The DEVH box motif lies at 420–423 (DEVH). Positions 582 to 752 (GLTSLDLTTS…LTYTMILNLL (171 aa)) constitute a Helicase C-terminal domain.

Belongs to the helicase family. SKI2 subfamily. In terms of assembly, component of the SKI complex which consists of SKIC2, SKIC3 and SKIC8. Interacts with HBS1L isoform 2.

It is found in the nucleus. Its subcellular location is the cytoplasm. It catalyses the reaction ATP + H2O = ADP + phosphate + H(+). Functionally, helicase component of the SKI complex, a multiprotein complex that assists the RNA-degrading exosome during the mRNA decay and quality-control pathways. The SKI complex catalyzes mRNA extraction from 80S ribosomal complexes in the 3'-5' direction and channels mRNA to the cytosolic exosome for degradation. SKI-mediated extraction of mRNA from stalled ribosomes allow binding of the Pelota-HBS1L complex and subsequent ribosome disassembly by ABCE1 for ribosome recycling. In the nucleus, the SKI complex associates with transcriptionally active genes in a manner dependent on PAF1 complex (PAF1C). In Mus musculus (Mouse), this protein is Superkiller complex protein 2.